The primary structure comprises 232 residues: Probable proteasome subunit alpha type-5 (232 aa).

It belongs to the peptidase T1A family. In terms of assembly, the 26S proteasome consists of a 20S proteasome core and two 19S regulatory subunits. The 20S proteasome core is composed of 28 subunits that are arranged in four stacked rings, resulting in a barrel-shaped structure. The two end rings are each formed by seven alpha subunits, and the two central rings are each formed by seven beta subunits. The catalytic chamber with the active sites is on the inside of the barrel.

It localises to the cytoplasm. The protein localises to the nucleus. In terms of biological role, the proteasome degrades poly-ubiquitinated proteins in the cytoplasm and in the nucleus. It is essential for the regulated turnover of proteins and for the removal of misfolded proteins. The proteasome is a multicatalytic proteinase complex that is characterized by its ability to cleave peptides with Arg, Phe, Tyr, Leu, and Glu adjacent to the leaving group at neutral or slightly basic pH. It has an ATP-dependent proteolytic activity. This Encephalitozoon cuniculi (strain GB-M1) (Microsporidian parasite) protein is Probable proteasome subunit alpha type-5 (PUP2).